The following is a 292-amino-acid chain: N-acetylneuraminate lyase (292 aa).

Residues Ser46 and Thr47 each coordinate aceneuramate. The Proton donor role is filled by Tyr135. Lys163 functions as the Schiff-base intermediate with substrate in the catalytic mechanism. Aceneuramate-binding residues include Thr165, Gly187, Asp189, Glu190, and Ser206.

Belongs to the DapA family. NanA subfamily. In terms of assembly, homotetramer.

Its subcellular location is the cytoplasm. It catalyses the reaction aceneuramate = aldehydo-N-acetyl-D-mannosamine + pyruvate. It functions in the pathway amino-sugar metabolism; N-acetylneuraminate degradation; D-fructose 6-phosphate from N-acetylneuraminate: step 1/5. In terms of biological role, catalyzes the reversible aldol cleavage of N-acetylneuraminic acid (sialic acid; Neu5Ac) to form pyruvate and N-acetylmannosamine (ManNAc) via a Schiff base intermediate. The chain is N-acetylneuraminate lyase from Lactiplantibacillus plantarum (strain ATCC BAA-793 / NCIMB 8826 / WCFS1) (Lactobacillus plantarum).